The primary structure comprises 316 residues: MGAGHSHDHPGGNERSLKIALALTGTFLIAEVVGGVMTKSLALISDAAHMLTDTVALAIALAAIAIAKRPADKKRTFGYYRFEILAAAFNALLLFGVAIYILYEAYLRLKSPPQIESTGMFVVAVLGLIINLISMRMLSSGQSSSLNVKGAYLEVWSDLLGSVGVIAGAIIIRFTGWAWVDSAIAVLIGLWVLPRTWFLLKSSLNVLLEGVPDDVDLAEVEKQILATPGVKSFHDLHIWALTSGKASLTVHVVNDTAVNPEMEVLPELKQMLADKFDITHVTIQFELAPCEQADAAQHFNASPALVGSKSLAAGGN.

6 helical membrane passes run 17–37 (LKIA…GGVM), 47–67 (AAHM…IAIA), 82–102 (FEIL…IYIL), 115–135 (IEST…LISM), 152–172 (YLEV…AIII), and 174–194 (FTGW…WVLP).

Belongs to the cation diffusion facilitator (CDF) transporter (TC 2.A.4) family. SLC30A subfamily.

The protein resides in the cell membrane. Its function is as follows. Necessary for activation of the czc determinant. This is Cation efflux system protein CzcD (czcD) from Alcaligenes sp. (strain CT14).